A 406-amino-acid chain; its full sequence is Leu/Ile/Val-binding protein homolog 5 (406 aa).

A signal peptide spans 1–29; it reads MIGTRLPAWTRVLACGVAGLSLMTISAKA.

It belongs to the leucine-binding protein family.

Its function is as follows. Component of an amino-acid transport system. The polypeptide is Leu/Ile/Val-binding protein homolog 5 (Brucella abortus (strain 2308)).